The sequence spans 215 residues: Sec-independent protein translocase protein TatB (215 aa).

A helical transmembrane segment spans residues 1–21; the sequence is MLDIGWTELVVIAIVLIIVVG. Disordered regions lie at residues 95–119 and 138–215; these read DLQKATTPDRPPASATPEPLVEPVN and AVSS…KGDA. A compositionally biased stretch (basic and acidic residues) spans 145–157; the sequence is QMDRAADVPKASE. The span at 203 to 215 shows a compositional bias: basic residues; the sequence is SKTRAASRKKGDA.

The protein belongs to the TatB family. As to quaternary structure, the Tat system comprises two distinct complexes: a TatABC complex, containing multiple copies of TatA, TatB and TatC subunits, and a separate TatA complex, containing only TatA subunits. Substrates initially bind to the TatABC complex, which probably triggers association of the separate TatA complex to form the active translocon.

It localises to the cell inner membrane. In terms of biological role, part of the twin-arginine translocation (Tat) system that transports large folded proteins containing a characteristic twin-arginine motif in their signal peptide across membranes. Together with TatC, TatB is part of a receptor directly interacting with Tat signal peptides. TatB may form an oligomeric binding site that transiently accommodates folded Tat precursor proteins before their translocation. The sequence is that of Sec-independent protein translocase protein TatB from Rhizobium meliloti (strain 1021) (Ensifer meliloti).